Here is a 303-residue protein sequence, read N- to C-terminus: Mitochondrial basic amino acids transporter (303 aa).

6 consecutive transmembrane segments (helical) span residues 2–22, 61–81, 96–116, 153–172, 187–207, and 255–275; these read ALDF…GHPF, GLGS…GVQG, FLAG…MELA, GMVS…FLTY, LLVP…WLST, and LLRA…VLTY. 3 Solcar repeats span residues 2 to 86, 90 to 178, and 185 to 275; these read ALDF…TLRA, DSPL…LTRA, and DRLL…VLTY. The tract at residues 282–303 is disordered; that stretch reads GPEGEAVPAAPAGPALAQPSSL. Over residues 284–303 the composition is skewed to low complexity; the sequence is EGEAVPAAPAGPALAQPSSL.

It belongs to the mitochondrial carrier (TC 2.A.29) family.

Its subcellular location is the mitochondrion inner membrane. It catalyses the reaction L-lysine(out) + L-arginine(in) = L-lysine(in) + L-arginine(out). The enzyme catalyses L-histidine(out) + L-arginine(in) = L-histidine(in) + L-arginine(out). It carries out the reaction L-ornithine(in) + L-arginine(out) = L-ornithine(out) + L-arginine(in). The catalysed reaction is L-homoarginine(in) + L-arginine(out) = L-homoarginine(out) + L-arginine(in). It catalyses the reaction N(omega)-methyl-L-arginine(in) + L-arginine(out) = N(omega)-methyl-L-arginine(out) + L-arginine(in). The enzyme catalyses L-arginine(in) = L-arginine(out). It carries out the reaction L-lysine(in) = L-lysine(out). The catalysed reaction is L-ornithine(in) = L-ornithine(out). It catalyses the reaction L-histidine(out) = L-histidine(in). Mitochondrial transporter of arginine, lysine, homoarginine, methylarginine and, to a much lesser extent, ornithine and histidine. Does not transport carnitine nor acylcarnitines. Functions by both counter-exchange and uniport mechanisms. Plays a physiological role in the import of basic amino acids into mitochondria for mitochondrial protein synthesis and amino acid degradation. The polypeptide is Mitochondrial basic amino acids transporter (Homo sapiens (Human)).